The sequence spans 703 residues: Protein O-mannosyl-transferase TMEM260 (703 aa).

8 consecutive transmembrane segments (helical) span residues 20–40 (GALR…TLTL), 68–88 (PLFT…SVAY), 90–110 (VNLL…YTVF), 137–157 (IAAE…ALTV), 182–202 (SLCN…WILF), 218–238 (LTLA…SSYL), 314–334 (KSSV…FFAW), and 352–372 (FWLQ…ATLV). N-linked (GlcNAc...) asparagine glycans are attached at residues Asn403 and Asn564.

The protein belongs to the glycosyltransferase 117 (GT117) family.

It is found in the endoplasmic reticulum membrane. It carries out the reaction a di-trans,poly-cis-dolichyl beta-D-mannosyl phosphate + L-seryl-[protein] = 3-O-(alpha-D-mannosyl)-L-seryl-[protein] + a di-trans,poly-cis-dolichyl phosphate + H(+). The enzyme catalyses a di-trans,poly-cis-dolichyl beta-D-mannosyl phosphate + L-threonyl-[protein] = 3-O-(alpha-D-mannosyl)-L-threonyl-[protein] + a di-trans,poly-cis-dolichyl phosphate + H(+). In terms of biological role, O-mannosyl-transferase that transfers mannosyl residues to the hydroxyl group of serine or threonine residues of proteins. Specifically glycosylates the IPT/TIG domain of target proteins, such as MET and MST1R/RON. TMEM260-mediated O-mannosylated residues are composed of single mannose glycans that are not elongated or modified. The polypeptide is Protein O-mannosyl-transferase TMEM260 (Mus musculus (Mouse)).